Consider the following 145-residue polypeptide: Histone H2B.7 (145 aa).

Positions 1 to 30 (MAPKAEKKPAEKKPVEEKSKAEKAPAEKKP) are enriched in basic and acidic residues. A disordered region spans residues 1-53 (MAPKAEKKPAEKKPVEEKSKAEKAPAEKKPKAGKKLPKEAGAGGDKKKKMKKK). Ala-2 bears the N,N,N-trimethylalanine; alternate mark. Position 2 is a n,N-dimethylalanine; alternate (Ala-2). At Ala-2 the chain carries N-methylalanine; alternate. An N6-methyllysine; partial modification is found at Lys-4. 2 positions are modified to N6-acetyllysine: Lys-7 and Lys-12. Lys-13 is modified (N6,N6-dimethyllysine). 3 positions are modified to N6-acetyllysine: Lys-23, Lys-28, and Lys-34. Lys-35 carries the N6-acetyllysine; partial modification. Lys-141 is covalently cross-linked (Glycyl lysine isopeptide (Lys-Gly) (interchain with G-Cter in ubiquitin)).

It belongs to the histone H2B family. In terms of assembly, the nucleosome is a histone octamer containing two molecules each of H2A, H2B, H3 and H4 assembled in one H3-H4 heterotetramer and two H2A-H2B heterodimers. The octamer wraps approximately 147 bp of DNA. In terms of processing, can be acetylated to form H2BK6ac, H2BK11ac, H2BK22ac, H2BK27ac H2BK33ac and H2BK34ac. Mono-, di- or trimethylated at the N-terminus to form H2BA1me1/2/3. H2BA1me2 and H2BA1me3 may be methylated and/or acetylated to form H2BA1me2K3me1, H2BA1me2K3me1K6ac, H2BA1me2K6ac H2BA1me3K6ac, H2BA1me3K6acK11ac and H2BA1me2K3me1K6acK11ac. Post-translationally, monoubiquitinated by BRE1 to form H2BK143ub1 and deubiquitinated by UBP26. Required for heterochromatic histone H3 di- and trimethylation at H3K4me. May give a specific tag for epigenetic transcriptional activation.

Its subcellular location is the nucleus. It localises to the chromosome. Functionally, core component of nucleosome. Nucleosomes wrap and compact DNA into chromatin, limiting DNA accessibility to the cellular machineries which require DNA as a template. Histones thereby play a central role in transcription regulation, DNA repair, DNA replication and chromosomal stability. DNA accessibility is regulated via a complex set of post-translational modifications of histones, also called histone code, and nucleosome remodeling. In Arabidopsis thaliana (Mouse-ear cress), this protein is Histone H2B.7.